The primary structure comprises 132 residues: Flagellar assembly factor FliW (132 aa).

This sequence belongs to the FliW family. In terms of assembly, interacts with translational regulator CsrA and flagellin(s).

It is found in the cytoplasm. Acts as an anti-CsrA protein, binds CsrA and prevents it from repressing translation of its target genes, one of which is flagellin. Binds to flagellin and participates in the assembly of the flagellum. This is Flagellar assembly factor FliW from Borreliella afzelii (strain PKo) (Borrelia afzelii).